A 185-amino-acid polypeptide reads, in one-letter code: Elongation factor P (185 aa).

It belongs to the elongation factor P family.

The protein resides in the cytoplasm. The protein operates within protein biosynthesis; polypeptide chain elongation. Functionally, involved in peptide bond synthesis. Stimulates efficient translation and peptide-bond synthesis on native or reconstituted 70S ribosomes in vitro. Probably functions indirectly by altering the affinity of the ribosome for aminoacyl-tRNA, thus increasing their reactivity as acceptors for peptidyl transferase. The chain is Elongation factor P from Deinococcus geothermalis (strain DSM 11300 / CIP 105573 / AG-3a).